A 623-amino-acid polypeptide reads, in one-letter code: Kelch repeat and BTB domain-containing protein 12 (623 aa).

Positions 25-92 constitute a BTB domain; the sequence is TDVVLVAEGV…MYSSNLPLTA (68 aa). The BACK domain occupies 127 to 236; that stretch reads CLGIYYYARD…GVDYLKGTMK (110 aa). Kelch repeat units follow at residues 390 to 440, 441 to 496, 498 to 551, and 557 to 607; these read NLYL…RMKG, RLYV…ALNG, IYVL…ASNA, and KLYV…LVAN.

This Danio rerio (Zebrafish) protein is Kelch repeat and BTB domain-containing protein 12 (kbtbd12).